Consider the following 160-residue polypeptide: Small ribosomal subunit protein uS7A (160 aa).

The protein belongs to the universal ribosomal protein uS7 family. Part of the 30S ribosomal subunit. Contacts proteins S9 and S11.

One of the primary rRNA binding proteins, it binds directly to 16S rRNA where it nucleates assembly of the head domain of the 30S subunit. Is located at the subunit interface close to the decoding center, probably blocks exit of the E-site tRNA. The sequence is that of Small ribosomal subunit protein uS7A from Aquifex aeolicus (strain VF5).